The chain runs to 302 residues: NAD kinase 2 (302 aa).

Asp-78 acts as the Proton acceptor in catalysis. NAD(+) is bound by residues 78 to 79, 152 to 153, Asp-182, and 193 to 198; these read DG, NE, and TAYSLS.

It belongs to the NAD kinase family. The cofactor is a divalent metal cation.

It localises to the cytoplasm. It carries out the reaction NAD(+) + ATP = ADP + NADP(+) + H(+). Its function is as follows. Involved in the regulation of the intracellular balance of NAD and NADP, and is a key enzyme in the biosynthesis of NADP. Catalyzes specifically the phosphorylation on 2'-hydroxyl of the adenosine moiety of NAD to yield NADP. The protein is NAD kinase 2 of Prochlorococcus marinus (strain NATL2A).